The following is a 292-amino-acid chain: Chondroitin proteoglycan 3 (292 aa).

The signal sequence occupies residues 1–17; the sequence is MRFVFIIALLLIGASLA. The segment at 28–103 is disordered; sequence DVSASEDEFS…EGSGDTSPVV (76 aa). Low complexity predominate over residues 38-80; the sequence is GDSSGEISGESSGEASGEASGEASGEASGEASGESSGETSGES. Acidic residues predominate over residues 81 to 96; that stretch reads SGDEETSGEGSGEEGS. Residues Asn174 and Asn254 are each glycosylated (N-linked (GlcNAc...) asparagine).

This chain is Chondroitin proteoglycan 3, found in Caenorhabditis elegans.